The primary structure comprises 115 residues: MKVCRIHCALALLGLALAICSQGAASQPDLDLRSRRLLQRARAAAWPHRSGVSERWRTFYPNCPCLRPRKVKCPAGAKEDLRVELERSVGNPNNLPPRERKAGCKNFYWKGFTSC.

A signal peptide spans 1 to 18; it reads MKVCRIHCALALLGLALA. The propeptide occupies 19–87; sequence ICSQGAASQP…KEDLRVELER (69 aa). Cysteine 104 and cysteine 115 are oxidised to a cystine.

This sequence belongs to the somatostatin family.

The protein localises to the secreted. Its function is as follows. Somatostatin inhibits the release of somatotropin. This is Somatostatin-2 (sst2) from Oncorhynchus mykiss (Rainbow trout).